We begin with the raw amino-acid sequence, 118 residues long: Small ribosomal subunit protein uS11 (118 aa).

This sequence belongs to the universal ribosomal protein uS11 family. As to quaternary structure, part of the 30S ribosomal subunit. Interacts with proteins S7 and S18. Binds to IF-3.

Functionally, located on the platform of the 30S subunit, it bridges several disparate RNA helices of the 16S rRNA. Forms part of the Shine-Dalgarno cleft in the 70S ribosome. The sequence is that of Small ribosomal subunit protein uS11 from Carsonella ruddii (strain PV).